The primary structure comprises 744 residues: MNQKGTVRLKALVLICLPLFLIATPVPVAVTEDDRQDRIESEAAEKEWANTLVSKVAQSNGTGTIKVSAPAKPTLRRMDNEEDEVISIECVYYDEMECEKSGDCEITKKTCYSEAHLKAVGCLAVFGLPTQEINSTEPYLKVDKPQYKSLGCMPYQHADSMNCENESSCRQGRSFRGGIGMCCCSTNNCNMPDLIEMVNPSLKKDSDNSALLWASTPSNMDLESLDKFPFYWIIIIALSVILCIALLILAYVGWKFQQNKKEEIKKQQKIKFDMEKTDALEAGNVPLVEPEEEMIEMVETPKELPITDFQLISKGRFGKVFKAQYTPDSGEKRLVAVKKLNEFQKASFLAEKRIFDELNEYPKWYKSIVEFVCAEKIGDEYWIVTEFHERLSLYELLKNNVISITSANRIIMSMIDGLQFLHDDRPYFFGHPKKPIIHRDIKSKNILVKSDMTTCIADFGLARIYSYDIEQSDLLGQVGTKRYMSPEMLEGATEFTPTAFKAMDVYSMGLVMWEVISRTKLHQTDEPPNYQMPFQVIGFDPTIGLMRNYVVSKKERPQWRDEIIKHEYMSLLKKVTEEMWDPEACARITAGCAFARVWNHIMSSPDSSEGYHSGSSMKNRGVDDVEQSEKPEGIEEMQHYHASSPSKRQHPSPNPFFDSCPPPPPIPVILENGGILQPDNAEPEPEELPDLPIVEKIYDIATNMLFSREELDLMNAQRQVEYEAGADTRASTPTPSGTFGTFTT.

Positions 1–31 (MNQKGTVRLKALVLICLPLFLIATPVPVAVT) are cleaved as a signal peptide. Over 48 to 253 (WANTLVSKVA…IALLILAYVG (206 aa)) the chain is Extracellular. Asparagine 60, asparagine 134, and asparagine 165 each carry an N-linked (GlcNAc...) asparagine glycan. Residues 254 to 274 (WKFQQNKKEEIKKQQKIKFDM) traverse the membrane as a helical segment. Residues 275-744 (EKTDALEAGN…PSGTFGTFTT (470 aa)) lie on the Cytoplasmic side of the membrane. Positions 306 to 603 (ITDFQLISKG…FARVWNHIMS (298 aa)) constitute a Protein kinase domain. Residues 312–320 (ISKGRFGKV) and lysine 338 contribute to the ATP site. Aspartate 440 (proton acceptor) is an active-site residue. Disordered regions lie at residues 605-686 (PDSS…PEPE) and 724-744 (AGAD…TFTT). Basic and acidic residues predominate over residues 620–639 (RGVDDVEQSEKPEGIEEMQH). Low complexity predominate over residues 731 to 744 (STPTPSGTFGTFTT).

Belongs to the protein kinase superfamily. TKL Ser/Thr protein kinase family. TGFB receptor subfamily. May interact with daf-1 to regulate dauer larva development. Interacts with sma-10. Pharynx, intestine, hypodermis and body wall muscles in L1 through to adult stages. Also expressed in head neurons, ventral cord and tail neurons. Subset of head neurons show coexpression with daf-1 when dauer/nondauer decision is made.

The protein localises to the cell membrane. The enzyme catalyses L-threonyl-[receptor-protein] + ATP = O-phospho-L-threonyl-[receptor-protein] + ADP + H(+). It catalyses the reaction L-seryl-[receptor-protein] + ATP = O-phospho-L-seryl-[receptor-protein] + ADP + H(+). Its function is as follows. Involved in a TGF-beta pathway. May be a receptor for TGF-beta-like ligand daf-7. Controls the decision of whether or not larvae enter a developmentally arrested state, known as dauer, in response to environmental conditions. Regulates body size and male tail patterning. Involved in regulating entry into quiescence triggered by satiety. Involved in sensitivity to CO2 levels. This Caenorhabditis elegans protein is Cell surface receptor daf-4.